The following is a 393-amino-acid chain: MTRIGTPLSPTATRVLLCGCGELGKEVVIELQRLGVEVIAVDRYANAPAMQVAHRSHVVNMLDGVALRAVIEAEKPHYIVPEIEAIATATLVELENEGFTVVPTARATQLTMNREGIRRLAAEELDLPTSPYHFADTYEDYAKAVADLGYPCVVKPVMSSSGKGQSLLRSDADLQKSWDYAQEGGRAGKGRVIVEGFIDFEYEITLLTVRHVGGTTFLEPVGHRQEKGDYQESWQPQAMSPKALAESQRVAKAVTDALGGRGLFGVELFVKGDQVWFSEVSPRPHDTGLVTLISQDLSQFALHARAILGLPIPVVRQFGPSASAVILPEGQSQQTSFANLGAALSEPDTAIRLFGKPEINGTRRMGVCLARDESVELARAKATRASQAVKVEF.

N(1)-(5-phospho-beta-D-ribosyl)glycinamide contacts are provided by residues 22–23 and glutamate 82; that span reads EL. Residues arginine 114, lysine 155, 160–165, 195–198, and glutamate 203 each bind ATP; these read SSGKGQ and EGFI. The ATP-grasp domain maps to 119–308; sequence RLAAEELDLP…QFALHARAIL (190 aa). Residues glutamate 267 and glutamate 279 each contribute to the Mg(2+) site. N(1)-(5-phospho-beta-D-ribosyl)glycinamide is bound by residues aspartate 286, lysine 356, and 363–364; that span reads RR.

Belongs to the PurK/PurT family. Homodimer.

It carries out the reaction N(1)-(5-phospho-beta-D-ribosyl)glycinamide + formate + ATP = N(2)-formyl-N(1)-(5-phospho-beta-D-ribosyl)glycinamide + ADP + phosphate + H(+). It participates in purine metabolism; IMP biosynthesis via de novo pathway; N(2)-formyl-N(1)-(5-phospho-D-ribosyl)glycinamide from N(1)-(5-phospho-D-ribosyl)glycinamide (formate route): step 1/1. In terms of biological role, involved in the de novo purine biosynthesis. Catalyzes the transfer of formate to 5-phospho-ribosyl-glycinamide (GAR), producing 5-phospho-ribosyl-N-formylglycinamide (FGAR). Formate is provided by PurU via hydrolysis of 10-formyl-tetrahydrofolate. The polypeptide is Formate-dependent phosphoribosylglycinamide formyltransferase (Pseudomonas putida (strain ATCC 47054 / DSM 6125 / CFBP 8728 / NCIMB 11950 / KT2440)).